Reading from the N-terminus, the 197-residue chain is MTNRDIVWHEASITKEEYQQKNKHKSSILWLTGLSGSGKSTIANAAARELFEQGYQVIVLDGDNIRHGLNRDLGFSDEDRKENIRRIGEVAKLFVQQGTIVITAFISPFREDRQQVRELVEAGEFNEVYIKCDLDICEQRDPKGLYKKARNGEIPFFTGIDSPYEEPEAPELVLDSGQHDREACKNQLIEFVKQKLS.

Residue 33–40 coordinates ATP; the sequence is GLSGSGKS. The Phosphoserine intermediate role is filled by Ser107.

The protein belongs to the APS kinase family.

It carries out the reaction adenosine 5'-phosphosulfate + ATP = 3'-phosphoadenylyl sulfate + ADP + H(+). The protein operates within sulfur metabolism; hydrogen sulfide biosynthesis; sulfite from sulfate: step 2/3. Catalyzes the synthesis of activated sulfate. This chain is Probable adenylyl-sulfate kinase (cysC), found in Bacillus subtilis (strain 168).